Consider the following 335-residue polypeptide: Holliday junction branch migration complex subunit RuvB (335 aa).

The tract at residues 4–183 (ADNLNVTSII…FGIVQRLEFY (180 aa)) is large ATPase domain (RuvB-L). ATP-binding positions include Arg-23, Gly-64, Lys-67, Thr-68, Thr-69, 130 to 132 (EDY), Arg-173, Tyr-183, and Arg-220. Thr-68 is a binding site for Mg(2+). Positions 184–254 (PTKDLQNIIS…VAMNALNMLN (71 aa)) are small ATPAse domain (RuvB-S). The segment at 257 to 335 (TAGFNFMDRQ…HFSLKQSRDI (79 aa)) is head domain (RuvB-H). 3 residues coordinate DNA: Arg-293, Arg-312, and Arg-317.

Belongs to the RuvB family. Homohexamer. Forms an RuvA(8)-RuvB(12)-Holliday junction (HJ) complex. HJ DNA is sandwiched between 2 RuvA tetramers; dsDNA enters through RuvA and exits via RuvB. An RuvB hexamer assembles on each DNA strand where it exits the tetramer. Each RuvB hexamer is contacted by two RuvA subunits (via domain III) on 2 adjacent RuvB subunits; this complex drives branch migration. In the full resolvosome a probable DNA-RuvA(4)-RuvB(12)-RuvC(2) complex forms which resolves the HJ.

The protein localises to the cytoplasm. It catalyses the reaction ATP + H2O = ADP + phosphate + H(+). Functionally, the RuvA-RuvB-RuvC complex processes Holliday junction (HJ) DNA during genetic recombination and DNA repair, while the RuvA-RuvB complex plays an important role in the rescue of blocked DNA replication forks via replication fork reversal (RFR). RuvA specifically binds to HJ cruciform DNA, conferring on it an open structure. The RuvB hexamer acts as an ATP-dependent pump, pulling dsDNA into and through the RuvAB complex. RuvB forms 2 homohexamers on either side of HJ DNA bound by 1 or 2 RuvA tetramers; 4 subunits per hexamer contact DNA at a time. Coordinated motions by a converter formed by DNA-disengaged RuvB subunits stimulates ATP hydrolysis and nucleotide exchange. Immobilization of the converter enables RuvB to convert the ATP-contained energy into a lever motion, pulling 2 nucleotides of DNA out of the RuvA tetramer per ATP hydrolyzed, thus driving DNA branch migration. The RuvB motors rotate together with the DNA substrate, which together with the progressing nucleotide cycle form the mechanistic basis for DNA recombination by continuous HJ branch migration. Branch migration allows RuvC to scan DNA until it finds its consensus sequence, where it cleaves and resolves cruciform DNA. The protein is Holliday junction branch migration complex subunit RuvB of Baumannia cicadellinicola subsp. Homalodisca coagulata.